A 164-amino-acid polypeptide reads, in one-letter code: MAKKKKKVDENNQVLATNRKARHDYQILDTWEAGVVLLGTEIKSLREGKASLVDAFAVIDNGEVWLHNLHIPTYSMGSWTNHSPKRTRKLLLHRREIDSLMGKVRDGNRTLVPLKLYLVNGRVKLELGLAQGKQDYDKRQDIKRRTEEREVTRELGRRIKGINA.

This sequence belongs to the SmpB family.

Its subcellular location is the cytoplasm. Functionally, required for rescue of stalled ribosomes mediated by trans-translation. Binds to transfer-messenger RNA (tmRNA), required for stable association of tmRNA with ribosomes. tmRNA and SmpB together mimic tRNA shape, replacing the anticodon stem-loop with SmpB. tmRNA is encoded by the ssrA gene; the 2 termini fold to resemble tRNA(Ala) and it encodes a 'tag peptide', a short internal open reading frame. During trans-translation Ala-aminoacylated tmRNA acts like a tRNA, entering the A-site of stalled ribosomes, displacing the stalled mRNA. The ribosome then switches to translate the ORF on the tmRNA; the nascent peptide is terminated with the 'tag peptide' encoded by the tmRNA and targeted for degradation. The ribosome is freed to recommence translation, which seems to be the essential function of trans-translation. The polypeptide is SsrA-binding protein (Corynebacterium efficiens (strain DSM 44549 / YS-314 / AJ 12310 / JCM 11189 / NBRC 100395)).